A 111-amino-acid polypeptide reads, in one-letter code: Iron-sulfur cluster assembly protein CyaY (111 aa).

The protein belongs to the frataxin family.

Involved in iron-sulfur (Fe-S) cluster assembly. May act as a regulator of Fe-S biogenesis. This Cupriavidus taiwanensis (strain DSM 17343 / BCRC 17206 / CCUG 44338 / CIP 107171 / LMG 19424 / R1) (Ralstonia taiwanensis (strain LMG 19424)) protein is Iron-sulfur cluster assembly protein CyaY.